We begin with the raw amino-acid sequence, 395 residues long: MGKEKFDRSKPHVNVGTIGHVDHGKTTLTAAISAVLAKSQGKAATKFDQIDGAPEERERGITIATAHIEYETDKRHYAHVDCPGHADYVKNMITGAAQMDGAILVVSATDGPMPQTREHILLSRQVGVPFIVVFMNKVDMVDDEELLELVEMEIRELLSEYDFPGDDLPVIQGSALGALNGEAKWEEKIMELMNAVDEYIPEPTRDTEKDFMMPVEDVFSITGRGTVATGRVERGVLKVNDEVEIVGLHEETKKSVCTGVEMFRKLLDYAEAGDNIGALLRGVSRDDIERGQVLAKPNTITPHKTFKAQVYILSKEEGGRHTPFFGNYRPQFYFRTTDVTGMCQLPEGTEMVMPGDNIELTVELIAPIALEKETRFSIREGGRTVGAGSVTEIVE.

The tr-type G domain occupies 10-204 (KPHVNVGTIG…AVDEYIPEPT (195 aa)). The interval 19-26 (GHVDHGKT) is G1. Residue 19–26 (GHVDHGKT) coordinates GTP. Thr-26 provides a ligand contact to Mg(2+). Residues 60–64 (GITIA) form a G2 region. The segment at 81–84 (DCPG) is G3. GTP contacts are provided by residues 81–85 (DCPGH) and 136–139 (NKVD). A G4 region spans residues 136–139 (NKVD). Residues 174-176 (SAL) are G5.

The protein belongs to the TRAFAC class translation factor GTPase superfamily. Classic translation factor GTPase family. EF-Tu/EF-1A subfamily. In terms of assembly, monomer.

It is found in the cytoplasm. It carries out the reaction GTP + H2O = GDP + phosphate + H(+). Its function is as follows. GTP hydrolase that promotes the GTP-dependent binding of aminoacyl-tRNA to the A-site of ribosomes during protein biosynthesis. This is Elongation factor Tu from Exiguobacterium sibiricum (strain DSM 17290 / CCUG 55495 / CIP 109462 / JCM 13490 / 255-15).